The primary structure comprises 185 residues: Large ribosomal subunit protein uL5 (185 aa).

Belongs to the universal ribosomal protein uL5 family. In terms of assembly, part of the 50S ribosomal subunit; part of the 5S rRNA/L5/L18/L25 subcomplex. Contacts the 5S rRNA and the P site tRNA. Forms a bridge to the 30S subunit in the 70S ribosome.

Its function is as follows. This is one of the proteins that bind and probably mediate the attachment of the 5S RNA into the large ribosomal subunit, where it forms part of the central protuberance. In the 70S ribosome it contacts protein S13 of the 30S subunit (bridge B1b), connecting the 2 subunits; this bridge is implicated in subunit movement. Contacts the P site tRNA; the 5S rRNA and some of its associated proteins might help stabilize positioning of ribosome-bound tRNAs. This Bacteroides thetaiotaomicron (strain ATCC 29148 / DSM 2079 / JCM 5827 / CCUG 10774 / NCTC 10582 / VPI-5482 / E50) protein is Large ribosomal subunit protein uL5.